A 607-amino-acid chain; its full sequence is UvrABC system protein C (607 aa).

Positions 16–94 constitute a GIY-YIG domain; the sequence is GRPGVYRMFD…IKEWRPPYNI (79 aa). A UVR domain is found at 203–238; that stretch reads HALTNELSTAMEEAAINLEFERAAELRDQIALLRRV.

Belongs to the UvrC family. As to quaternary structure, interacts with UvrB in an incision complex.

Its subcellular location is the cytoplasm. The UvrABC repair system catalyzes the recognition and processing of DNA lesions. UvrC both incises the 5' and 3' sides of the lesion. The N-terminal half is responsible for the 3' incision and the C-terminal half is responsible for the 5' incision. This Pseudomonas fluorescens (strain Pf0-1) protein is UvrABC system protein C.